The following is a 215-amino-acid chain: Leucyl/phenylalanyl-tRNA--protein transferase (215 aa).

Belongs to the L/F-transferase family.

It is found in the cytoplasm. It carries out the reaction N-terminal L-lysyl-[protein] + L-leucyl-tRNA(Leu) = N-terminal L-leucyl-L-lysyl-[protein] + tRNA(Leu) + H(+). The enzyme catalyses N-terminal L-arginyl-[protein] + L-leucyl-tRNA(Leu) = N-terminal L-leucyl-L-arginyl-[protein] + tRNA(Leu) + H(+). The catalysed reaction is L-phenylalanyl-tRNA(Phe) + an N-terminal L-alpha-aminoacyl-[protein] = an N-terminal L-phenylalanyl-L-alpha-aminoacyl-[protein] + tRNA(Phe). In terms of biological role, functions in the N-end rule pathway of protein degradation where it conjugates Leu, Phe and, less efficiently, Met from aminoacyl-tRNAs to the N-termini of proteins containing an N-terminal arginine or lysine. The chain is Leucyl/phenylalanyl-tRNA--protein transferase from Campylobacter jejuni (strain RM1221).